The chain runs to 258 residues: Global transcriptional regulator CodY (258 aa).

The tract at residues methionine 1 to leucine 156 is GAF domain. Positions alanine 204–arginine 223 form a DNA-binding region, H-T-H motif.

This sequence belongs to the CodY family.

The protein resides in the cytoplasm. Functionally, DNA-binding global transcriptional regulator which is involved in the adaptive response to starvation and acts by directly or indirectly controlling the expression of numerous genes in response to nutrient availability. During rapid exponential growth, CodY is highly active and represses genes whose products allow adaptation to nutrient depletion. The chain is Global transcriptional regulator CodY from Clostridium botulinum (strain ATCC 19397 / Type A).